Consider the following 70-residue polypeptide: MLVISRKKDEAVLIGDNIEVKVVGVDGNNIKLAISAPNNISILRKEIYEKVKNENIKATNKNIKILKSLK.

Belongs to the CsrA/RsmA family. As to quaternary structure, homodimer; the beta-strands of each monomer intercalate to form a hydrophobic core, while the alpha-helices form wings that extend away from the core.

It localises to the cytoplasm. Functionally, a translational regulator that binds mRNA to regulate translation initiation and/or mRNA stability. Usually binds in the 5'-UTR at or near the Shine-Dalgarno sequence preventing ribosome-binding, thus repressing translation. Its main target seems to be the major flagellin gene, while its function is anatagonized by FliW. The chain is Translational regulator CsrA from Clostridioides difficile (strain 630) (Peptoclostridium difficile).